The chain runs to 979 residues: Chromosome partition protein Smc (979 aa).

33–40 (PNGSGKSN) is a binding site for ATP. Residues 169–400 (SKYKLDKEEA…INILKQQFEN (232 aa)) adopt a coiled-coil conformation. Residues 419–538 (DGYIGLASEL…DNVDNANRIA (120 aa)) form the SMC hinge domain. Coiled-coil stretches lie at residues 572–716 (ILNY…HSDS) and 750–818 (SLDL…DKII).

This sequence belongs to the SMC family. Homodimer.

The protein resides in the cytoplasm. Functionally, required for chromosome condensation and partitioning. This is Chromosome partition protein Smc from Mesomycoplasma hyorhinis (Mycoplasma hyorhinis).